Consider the following 91-residue polypeptide: Thioredoxin (91 aa).

One can recognise a Thioredoxin domain in the interval 2-91; it reads SDSIVHVTDD…SRQSEVEATK (90 aa). Residues Cys33 and Cys36 are joined by a disulfide bond.

The protein belongs to the thioredoxin family.

Participates in various redox reactions through the reversible oxidation of its active center dithiol to a disulfide and catalyzes dithiol-disulfide exchange reactions. This Thiocapsa roseopersicina protein is Thioredoxin (trxA).